Consider the following 386-residue polypeptide: Protein RecA (386 aa).

Residue 76 to 83 coordinates ATP; that stretch reads GPESSGKT. A disordered region spans residues 362 to 386; that stretch reads FDDEDDDFDASTAPAGTFTEVTTEN.

It belongs to the RecA family.

It localises to the cytoplasm. In terms of biological role, can catalyze the hydrolysis of ATP in the presence of single-stranded DNA, the ATP-dependent uptake of single-stranded DNA by duplex DNA, and the ATP-dependent hybridization of homologous single-stranded DNAs. It interacts with LexA causing its activation and leading to its autocatalytic cleavage. This Corynebacterium efficiens (strain DSM 44549 / YS-314 / AJ 12310 / JCM 11189 / NBRC 100395) protein is Protein RecA.